A 333-amino-acid chain; its full sequence is Fructose-1,6-bisphosphatase class 1 (333 aa).

Residues Glu-90, Asp-113, Leu-115, and Asp-116 each contribute to the Mg(2+) site. Residues 116–119 (DGSS), Asn-209, Tyr-242, and Lys-272 each bind substrate. Mg(2+) is bound at residue Glu-278.

Belongs to the FBPase class 1 family. Homotetramer. The cofactor is Mg(2+).

It localises to the cytoplasm. The catalysed reaction is beta-D-fructose 1,6-bisphosphate + H2O = beta-D-fructose 6-phosphate + phosphate. The protein operates within carbohydrate biosynthesis; gluconeogenesis. The sequence is that of Fructose-1,6-bisphosphatase class 1 from Pasteurella multocida (strain Pm70).